We begin with the raw amino-acid sequence, 360 residues long: Glutamate--cysteine ligase (360 aa).

The protein belongs to the glutamate--cysteine ligase type 2 family. YbdK subfamily.

The catalysed reaction is L-cysteine + L-glutamate + ATP = gamma-L-glutamyl-L-cysteine + ADP + phosphate + H(+). Catalyzes the synthesis of gamma-glutamylcysteine (gamma-GC), the main low-molecular-weight thiol compound instead of glutathione in halophilic archaea. The polypeptide is Glutamate--cysteine ligase (Halobacterium salinarum (strain ATCC 29341 / DSM 671 / R1)).